A 324-amino-acid chain; its full sequence is Transcription factor TCP24 (324 aa).

In terms of domain architecture, TCP spans 50–108 (GKDRHSKVLTSKGLRDRRIRLSVATAIQFYDLQDRLGFDQPSKAVEWLINAASDSITDL). Disordered stretches follow at residues 122–215 (QNQT…PMNH) and 261–297 (QRSS…NHQL). Residues 127–142 (SACSSGTSESSLLSLS) are compositionally biased toward low complexity. The R domain maps to 144 to 162 (TEIRGKARERARERTAKDR). Positions 144–167 (TEIRGKARERARERTAKDRDKDLQ) are enriched in basic and acidic residues. 2 stretches are compositionally biased toward polar residues: residues 168 to 192 (NAHS…NWTG) and 200 to 212 (VQLQ…SQEP). A compositionally biased stretch (low complexity) spans 261–281 (QRSSISSSSSSSSPMDSQSIS).

Forms a heterodimeric complex with ABAP1. Interacts with SPL. Expressed in cotyledons, particularly in the vascular region, in leaves, roots, stems, buds, flowers and siliques.

It is found in the nucleus. In terms of biological role, plays a pivotal role in the control of morphogenesis of shoot organs by negatively regulating the expression of boundary-specific genes such as CUC genes, probably through the induction of miRNA (e.g. miR164). In association with ABAP1, exerts a negative role in cell proliferation in leaves, possibly by inhibiting mitotic DNA replication. Participates in ovule development. This chain is Transcription factor TCP24 (TCP24), found in Arabidopsis thaliana (Mouse-ear cress).